The chain runs to 201 residues: Regulator of G-protein signaling 16 (201 aa).

2 S-palmitoyl cysteine lipidation sites follow: Cys2 and Cys12. Residues 64 to 180 (SFDLLLNSKN…LKSPAYRDLA (117 aa)) form the RGS domain. Tyr167 carries the post-translational modification Phosphotyrosine; by EGFR. Position 176 is a phosphotyrosine (Tyr176). Positions 181 to 201 (AQASATSTSAPSGSPAEPSHT) are disordered.

In terms of assembly, interacts with GNAI1 and GNAQ. Interacts with GNAI3, GNAI3 and GNAO1. Post-translationally, palmitoylated on Cys-2 and/or Cys-12. In terms of processing, phosphorylated. Phosphorylation at Tyr-167 by EGFR enhances GTPase accelerating (GAP) activity toward GNAI1. In terms of tissue distribution, retinal; also predominantly expressed in the liver and pituitary.

The protein resides in the membrane. Functionally, regulates G protein-coupled receptor signaling cascades. Inhibits signal transduction by increasing the GTPase activity of G protein alpha subunits, thereby driving them into their inactive GDP-bound form. Plays an important role in the phototransduction cascade by regulating the lifetime and effective concentration of activated transducin alpha. May regulate extra and intracellular mitogenic signals. The polypeptide is Regulator of G-protein signaling 16 (Rgs16) (Mus musculus (Mouse)).